The chain runs to 901 residues: Protein translocase subunit SecA (901 aa).

Residues Q87, 105–109 (GEGKT), and D512 each bind ATP. The disordered stretch occupies residues 855–891 (QQLSHQDDETAAAAALAEQTGERKVGRNDPCPCGSGK). Residues C885, C887, C896, and H897 each contribute to the Zn(2+) site.

This sequence belongs to the SecA family. As to quaternary structure, monomer and homodimer. Part of the essential Sec protein translocation apparatus which comprises SecA, SecYEG and auxiliary proteins SecDF-YajC and YidC. It depends on Zn(2+) as a cofactor.

The protein localises to the cell inner membrane. Its subcellular location is the cytoplasm. It carries out the reaction ATP + H2O + cellular proteinSide 1 = ADP + phosphate + cellular proteinSide 2.. Its function is as follows. Part of the Sec protein translocase complex. Interacts with the SecYEG preprotein conducting channel. Has a central role in coupling the hydrolysis of ATP to the transfer of proteins into and across the cell membrane, serving both as a receptor for the preprotein-SecB complex and as an ATP-driven molecular motor driving the stepwise translocation of polypeptide chains across the membrane. The protein is Protein translocase subunit SecA of Cronobacter sakazakii (strain ATCC BAA-894) (Enterobacter sakazakii).